Reading from the N-terminus, the 465-residue chain is MSEAVPTSARKSRNAPVAPGPAPVLEIESLDMEARGVGRTITEDGEPGKVIFVEGALPGERVTYSSFRRKPSYEQATVVDILRPSVMRTKPKCAFFGTCGGCSMQHLDMRAQVAVKQRVLEDNLWHLAKLRAETMFAPIHGPSWGYRYRARLTVRNVAKKGGVLVGFHEKKSSYVADMTSCEVLPPHVSAMLVPLRRLVEGLSIRDRMPQIELAVGSEVTALVLRVLEPINADDEALLRAFADEHKVQFWLQPKGPDTVAPFYPLDVSLDYTLPEFGIRMPFKPTDFTQVNHQINRVLVGRALRLLAPSRDDRVLDLFCGIGNFTLPLARLSREVMGIEGSDTLTTRALANARENGVDGHTTFACRNLFEVTGDDIRALGAFDKFLIDPPREGALAVSKALAEIAQSGEGPLPKRIVYVSCNPSTLARDAGLLVHEAGYRLKGAGVVNMFPNTSHVESIALFERD.

Residues 1–22 (MSEAVPTSARKSRNAPVAPGPA) are disordered. The 65-residue stretch at 16-80 (PVAPGPAPVL…PSYEQATVVD (65 aa)) folds into the TRAM domain. [4Fe-4S] cluster-binding residues include cysteine 93, cysteine 99, cysteine 102, and cysteine 181. S-adenosyl-L-methionine is bound by residues glutamine 289, phenylalanine 318, asparagine 323, glutamate 339, asparagine 367, and aspartate 388. The active-site Nucleophile is cysteine 421.

This sequence belongs to the class I-like SAM-binding methyltransferase superfamily. RNA M5U methyltransferase family. RlmD subfamily.

The enzyme catalyses uridine(1939) in 23S rRNA + S-adenosyl-L-methionine = 5-methyluridine(1939) in 23S rRNA + S-adenosyl-L-homocysteine + H(+). Functionally, catalyzes the formation of 5-methyl-uridine at position 1939 (m5U1939) in 23S rRNA. This is 23S rRNA (uracil(1939)-C(5))-methyltransferase RlmD from Burkholderia lata (strain ATCC 17760 / DSM 23089 / LMG 22485 / NCIMB 9086 / R18194 / 383).